Consider the following 238-residue polypeptide: Probable transcriptional regulatory protein VIBHAR_07036 (238 aa).

This sequence belongs to the TACO1 family.

Its subcellular location is the cytoplasm. The polypeptide is Probable transcriptional regulatory protein VIBHAR_07036 (Vibrio campbellii (strain ATCC BAA-1116)).